The sequence spans 429 residues: Enolase (429 aa).

Q162 provides a ligand contact to (2R)-2-phosphoglycerate. Residue E204 is the Proton donor of the active site. The Mg(2+) site is built by D241, E283, and D310. The (2R)-2-phosphoglycerate site is built by K335, R364, S365, and K386. Residue K335 is the Proton acceptor of the active site.

This sequence belongs to the enolase family. Requires Mg(2+) as cofactor.

It is found in the cytoplasm. The protein resides in the secreted. Its subcellular location is the cell surface. It catalyses the reaction (2R)-2-phosphoglycerate = phosphoenolpyruvate + H2O. It functions in the pathway carbohydrate degradation; glycolysis; pyruvate from D-glyceraldehyde 3-phosphate: step 4/5. Functionally, catalyzes the reversible conversion of 2-phosphoglycerate (2-PG) into phosphoenolpyruvate (PEP). It is essential for the degradation of carbohydrates via glycolysis. The chain is Enolase from Mycolicibacterium gilvum (strain PYR-GCK) (Mycobacterium gilvum (strain PYR-GCK)).